We begin with the raw amino-acid sequence, 733 residues long: DNA-binding protein SATB2 (733 aa).

The segment at 1–47 is disordered; it reads MERRSESPCLRDSPDRRSGSPDVKGPPPVKVARLEQNGSPMGARGRP. The residue at position 20 (S20) is a Phosphoserine. Residues K24 and K30 each participate in a glycyl lysine isopeptide (Lys-Gly) (interchain with G-Cter in SUMO2) cross-link. Position 39 is a phosphoserine (S39). The CMP domain maps to 57-158; sequence GLMIPVFCVV…VVTLKIQLQS (102 aa). K161 participates in a covalent cross-link: Glycyl lysine isopeptide (Lys-Gly) (interchain with G-Cter in SUMO2). One can recognise a CUTL domain in the interval 161–234; that stretch reads KLEDLPAEQW…WYKKYKKIKV (74 aa). K233 participates in a covalent cross-link: Glycyl lysine isopeptide (Lys-Gly) (interchain with G-Cter in SUMO). A Glycyl lysine isopeptide (Lys-Gly) (interchain with G-Cter in SUMO); alternate cross-link involves residue K350. K350 is covalently cross-linked (Glycyl lysine isopeptide (Lys-Gly) (interchain with G-Cter in SUMO2); alternate). Positions 350–437 form a DNA-binding region, CUT 1; it reads KPEPTNSSVE…ERDRIYQDER (88 aa). Residues 435-473 form a disordered region; the sequence is DERERSMNPNVSMVSSASSSPSSSRTPQAKTSTPTTDLP. Residues 441–458 show a composition bias toward low complexity; that stretch reads MNPNVSMVSSASSSPSSS. A Phosphoserine modification is found at S454. A compositionally biased stretch (polar residues) spans 459–470; it reads RTPQAKTSTPTT. Phosphothreonine is present on T467. Positions 473–560 form a DNA-binding region, CUT 2; it reads PIKVDGANVN…ERDVIYEEES (88 aa). K475 participates in a covalent cross-link: Glycyl lysine isopeptide (Lys-Gly) (interchain with G-Cter in SUMO2). Disordered stretches follow at residues 580–617 and 691–733; these read QVLHRQQSQPTKESSPPREEAPPPPPPTEDSCAKKPRS and DEEL…TDQR. Residue S594 is modified to Phosphoserine. The homeobox DNA-binding region spans 615–674; sequence PRSRTKISLEALGILQSFIHDVGLYPDQEAIHTLSAQLDLPKHTIIKFFQNQRYHVKHHG. Residues 694–708 are compositionally biased toward acidic residues; sequence LLTESEENDSEEGSE. Residues 709–733 are compositionally biased toward basic and acidic residues; the sequence is EMYKVEAEEENADKSKAAPAETDQR. K724 is covalently cross-linked (Glycyl lysine isopeptide (Lys-Gly) (interchain with G-Cter in SUMO2)).

It belongs to the CUT homeobox family. Interacts with PIAS1. Interacts with ATF4 and RUNX2; resulting in enhanced DNA binding and transactivation by these transcription factors. Sumoylated by PIAS1. Sumoylation promotes nuclear localization, but represses transcription factor activity. In terms of tissue distribution, expressed in cortical neurons that extend axons across the corpus callosum. Also expressed in branchial arches and in cells of the osteoblast lineage, but not in chondrocytes and osteoclasts.

It localises to the nucleus matrix. Functionally, binds to DNA, at nuclear matrix- or scaffold-associated regions. Thought to recognize the sugar-phosphate structure of double-stranded DNA. Transcription factor controlling nuclear gene expression, by binding to matrix attachment regions (MARs) of DNA and inducing a local chromatin-loop remodeling. Acts as a docking site for several chromatin remodeling enzymes and also by recruiting corepressors (HDACs) or coactivators (HATs) directly to promoters and enhancers. Required for the initiation of the upper-layer neurons (UL1) specific genetic program and for the inactivation of deep-layer neurons (DL) and UL2 specific genes, probably by modulating Bcl11b expression. Repressor of Ctip2 and regulatory determinant of corticocortical connections in the developing cerebral cortex. May play an important role in palate formation. Acts as a molecular node in a transcriptional network regulating skeletal development and osteoblast differentiation. This is DNA-binding protein SATB2 (Satb2) from Mus musculus (Mouse).